A 193-amino-acid polypeptide reads, in one-letter code: Xanthine phosphoribosyltransferase (193 aa).

Residues L20 and N27 each contribute to the xanthine site. A 5-phospho-alpha-D-ribose 1-diphosphate-binding site is contributed by 129–133 (ANGKA). K157 is a xanthine binding site.

The protein belongs to the purine/pyrimidine phosphoribosyltransferase family. Xpt subfamily. Homodimer.

It is found in the cytoplasm. It catalyses the reaction XMP + diphosphate = xanthine + 5-phospho-alpha-D-ribose 1-diphosphate. It functions in the pathway purine metabolism; XMP biosynthesis via salvage pathway; XMP from xanthine: step 1/1. Its function is as follows. Converts the preformed base xanthine, a product of nucleic acid breakdown, to xanthosine 5'-monophosphate (XMP), so it can be reused for RNA or DNA synthesis. The protein is Xanthine phosphoribosyltransferase of Bifidobacterium longum subsp. infantis (strain ATCC 15697 / DSM 20088 / JCM 1222 / NCTC 11817 / S12).